Here is a 289-residue protein sequence, read N- to C-terminus: Phosphate import ATP-binding protein PstB (289 aa).

The interval 1-37 (MRSIDRPGGQAARPTIGSVAGASNTRTRDARSLPDTP) is disordered. Residues 41–284 (AAAENFSFYY…PVRRETEDYI (244 aa)) form the ABC transporter domain. 73-80 (GPSGCGKS) lines the ATP pocket.

It belongs to the ABC transporter superfamily. Phosphate importer (TC 3.A.1.7) family. As to quaternary structure, the complex is composed of two ATP-binding proteins (PstB), two transmembrane proteins (PstC and PstA) and a solute-binding protein (PstS).

It is found in the cell inner membrane. The enzyme catalyses phosphate(out) + ATP + H2O = ADP + 2 phosphate(in) + H(+). Its function is as follows. Part of the ABC transporter complex PstSACB involved in phosphate import. Responsible for energy coupling to the transport system. The polypeptide is Phosphate import ATP-binding protein PstB (Aromatoleum aromaticum (strain DSM 19018 / LMG 30748 / EbN1) (Azoarcus sp. (strain EbN1))).